The primary structure comprises 36 residues: Pancreatic polypeptide (36 aa).

Residue Y36 is modified to Tyrosine amide.

This sequence belongs to the NPY family.

The protein localises to the secreted. In terms of biological role, hormone secreted by pancreatic cells that acts as a regulator of pancreatic and gastrointestinal functions probably by signaling through the G protein-coupled receptor NPY4R2. The polypeptide is Pancreatic polypeptide (PPY) (Ceratotherium simum (White rhinoceros)).